The primary structure comprises 130 residues: Phosphomevalonate dehydratase small subunit (130 aa).

Ser-62 acts as the Proton acceptor in catalysis.

Belongs to the AcnX type II small subunit family. In terms of assembly, heterodimer composed of a large subunit (PMDh-L) and a small subunit (PMDh-S).

The enzyme catalyses (R)-5-phosphomevalonate = (2E)-3-methyl-5-phosphooxypent-2-enoate + H2O. The protein operates within isoprenoid biosynthesis; isopentenyl diphosphate biosynthesis via mevalonate pathway. Component of a hydro-lyase that catalyzes the dehydration of mevalonate 5-phosphate (MVA5P) to form trans-anhydromevalonate 5-phosphate (tAHMP). Involved in the archaeal mevalonate (MVA) pathway, which provides fundamental precursors for isoprenoid biosynthesis, such as isopentenyl diphosphate (IPP) and dimethylallyl diphosphate (DMAPP). The chain is Phosphomevalonate dehydratase small subunit from Thermococcus sibiricus (strain DSM 12597 / MM 739).